We begin with the raw amino-acid sequence, 88 residues long: Small ribosomal subunit protein eS21 (88 aa).

Belongs to the eukaryotic ribosomal protein eS21 family. In terms of assembly, component of the small ribosomal subunit. Mature ribosomes consist of a small (40S) and a large (60S) subunit. The 40S subunit contains about 33 different proteins and 1 molecule of RNA (18S). The 60S subunit contains about 49 different proteins and 3 molecules of RNA (25S, 5.8S and 5S).

It is found in the cytoplasm. Its function is as follows. Required for the processing of the 20S rRNA-precursor to mature 18S rRNA in a late step of the maturation of 40S ribosomal subunits. Has a physiological role leading to 18S rRNA stability. The sequence is that of Small ribosomal subunit protein eS21 (rps21) from Aspergillus fumigatus (strain ATCC MYA-4609 / CBS 101355 / FGSC A1100 / Af293) (Neosartorya fumigata).